The primary structure comprises 81 residues: Defensin-like protein 313 (81 aa).

A signal peptide spans 1-32; sequence MESKRSSSSPLLILITTIMIIFIISGPKSVDA. Disulfide bonds link C34–C63, C45–C74, and C49–C76.

The protein belongs to the DEFL family.

The protein localises to the secreted. The protein is Defensin-like protein 313 of Arabidopsis thaliana (Mouse-ear cress).